Here is a 312-residue protein sequence, read N- to C-terminus: Methionyl-tRNA formyltransferase (312 aa).

S117–P120 lines the (6S)-5,6,7,8-tetrahydrofolate pocket.

Belongs to the Fmt family.

The enzyme catalyses L-methionyl-tRNA(fMet) + (6R)-10-formyltetrahydrofolate = N-formyl-L-methionyl-tRNA(fMet) + (6S)-5,6,7,8-tetrahydrofolate + H(+). Its function is as follows. Attaches a formyl group to the free amino group of methionyl-tRNA(fMet). The formyl group appears to play a dual role in the initiator identity of N-formylmethionyl-tRNA by promoting its recognition by IF2 and preventing the misappropriation of this tRNA by the elongation apparatus. This Bordetella pertussis (strain Tohama I / ATCC BAA-589 / NCTC 13251) protein is Methionyl-tRNA formyltransferase.